Reading from the N-terminus, the 387-residue chain is Sulfopyruvate decarboxylase (387 aa).

It belongs to the TPP enzyme family. It depends on thiamine diphosphate as a cofactor.

The catalysed reaction is 3-sulfopyruvate + H(+) = sulfoacetaldehyde + CO2. The protein operates within cofactor biosynthesis; coenzyme M biosynthesis. In terms of biological role, involved in the biosynthesis of the coenzyme M (2-mercaptoethanesulfonic acid). Catalyzes the decarboxylation of sulfopyruvate to sulfoacetaldehyde. Is not able to decarboxylate the analogous compounds 2-oxoglutarate or 2-oxosuberate. This is Sulfopyruvate decarboxylase from Methanosarcina acetivorans (strain ATCC 35395 / DSM 2834 / JCM 12185 / C2A).